We begin with the raw amino-acid sequence, 164 residues long: Small ribosomal subunit protein uS5 (164 aa).

The S5 DRBM domain maps to 9–72 (YQEKLLKISR…AAAKKNIVKI (64 aa)).

Belongs to the universal ribosomal protein uS5 family. As to quaternary structure, part of the 30S ribosomal subunit. Contacts proteins S4 and S8.

Its function is as follows. With S4 and S12 plays an important role in translational accuracy. Functionally, located at the back of the 30S subunit body where it stabilizes the conformation of the head with respect to the body. The sequence is that of Small ribosomal subunit protein uS5 from Fusobacterium nucleatum subsp. nucleatum (strain ATCC 25586 / DSM 15643 / BCRC 10681 / CIP 101130 / JCM 8532 / KCTC 2640 / LMG 13131 / VPI 4355).